Consider the following 116-residue polypeptide: Iron-sulfur cluster insertion protein ErpA (116 aa).

Positions 44, 108, and 110 each coordinate iron-sulfur cluster.

It belongs to the HesB/IscA family. Homodimer. Iron-sulfur cluster is required as a cofactor.

In terms of biological role, required for insertion of 4Fe-4S clusters for at least IspG. The chain is Iron-sulfur cluster insertion protein ErpA from Shewanella sp. (strain ANA-3).